A 101-amino-acid polypeptide reads, in one-letter code: Small ubiquitin-related modifier 5 (101 aa).

A Required for PML-NB formation motif is present at residues 17–21; it reads IKDED. Lysine 18 participates in a covalent cross-link: Glycyl lysine isopeptide (Lys-Gly) (interchain with G-Cter in SUMO1P1/SUMO5). The region spanning 20–97 is the Ubiquitin-like domain; the sequence is EDIKLRVIGQ…IEVYQEQIGG (78 aa). A Glycyl lysine isopeptide (Gly-Lys) (interchain with K-? in acceptor proteins) cross-link involves residue glycine 97. A propeptide spanning residues 98-101 is cleaved from the precursor; sequence HSTV.

This sequence belongs to the ubiquitin family. SUMO subfamily. As to quaternary structure, interacts with CBX4. Interacts with PIAS1. Found in a complex with SAE2. Interacts with UBE2I. Interacts with SP100. Interacts with HIPK2. Interacts with DAXX. Interacts with PML-RARA oncoprotein; PML-RARalpha outcompetes PML for SUMO1P1/SUMO5 conjugation. Cleavage of precursor form is necessary for function. In terms of processing, autosumoylated at Lys-18. As to expression, high expression levels in testes and peripheral blood leukocyte. Expressed also in lung, placenta, liver, spleen and thymus.

The protein resides in the nucleus. Ubiquitin-like protein that can be covalently attached to proteins as a monomer or as a lysine-linked polymer. Regulates the life cycle of promyelocytic leukemia nuclear bodies (PML-NBs). PolySUMO1P1/SUMO5 conjugation on 'Lys-160' of PML facilitates recruitment of PML-NB components, which enlarges PML-NB. SUMO1P1/SUMO5 also increases polySUMO2/3 conjugation of PML, resulting in RNF4-mediated disruption of PML-NBs. This is Small ubiquitin-related modifier 5 from Homo sapiens (Human).